We begin with the raw amino-acid sequence, 533 residues long: GDP-fucose protein O-fucosyltransferase 4 (533 aa).

Residues 1–20 (MSAGCTQLVWGGRLHWGASH) are Cytoplasmic-facing. The helical; Signal-anchor for type II membrane protein transmembrane segment at 21–37 (LLSCLLALCALWVLAAA) threads the bilayer. Topologically, residues 38–533 (EPTEGGSANV…ETYIKRSMNH (496 aa)) are lumenal. Asparagine 148, asparagine 206, and asparagine 358 each carry an N-linked (GlcNAc...) asparagine glycan. Cysteine 429 and cysteine 432 form a disulfide bridge. Asparagine 511 is a glycosylation site (N-linked (GlcNAc...) asparagine).

Belongs to the glycosyltransferase 10 family.

Its subcellular location is the endoplasmic reticulum membrane. The catalysed reaction is L-threonyl-[protein] + GDP-beta-L-fucose = 3-O-(alpha-L-fucosyl)-L-threonyl-[protein] + GDP + H(+). It catalyses the reaction L-seryl-[protein] + GDP-beta-L-fucose = 3-O-(alpha-L-fucosyl)-L-seryl-[protein] + GDP + H(+). It participates in protein modification; protein glycosylation. Its function is as follows. Protein O-fucosyltransferase that specifically catalyzes O-fucosylation of serine or threonine residues in EMI domains of target proteins. Attaches fucose through an O-glycosidic linkage. O-fucosylation of EMI domain-containing proteins may be required for facilitating protein folding and secretion. This is GDP-fucose protein O-fucosyltransferase 4 (fut11) from Xenopus tropicalis (Western clawed frog).